Reading from the N-terminus, the 189-residue chain is Orotate phosphoribosyltransferase (189 aa).

Residues Arg99, Lys100, Lys103, His105, and 126-134 (EDVITTGGS) contribute to the 5-phospho-alpha-D-ribose 1-diphosphate site. Thr130 and Arg158 together coordinate orotate.

Belongs to the purine/pyrimidine phosphoribosyltransferase family. PyrE subfamily. In terms of assembly, homodimer. The cofactor is Mg(2+).

The catalysed reaction is orotidine 5'-phosphate + diphosphate = orotate + 5-phospho-alpha-D-ribose 1-diphosphate. Its pathway is pyrimidine metabolism; UMP biosynthesis via de novo pathway; UMP from orotate: step 1/2. Catalyzes the transfer of a ribosyl phosphate group from 5-phosphoribose 1-diphosphate to orotate, leading to the formation of orotidine monophosphate (OMP). The polypeptide is Orotate phosphoribosyltransferase (Thermosynechococcus vestitus (strain NIES-2133 / IAM M-273 / BP-1)).